We begin with the raw amino-acid sequence, 505 residues long: Lysine--tRNA ligase (505 aa).

Positions 415 and 422 each coordinate Mg(2+).

This sequence belongs to the class-II aminoacyl-tRNA synthetase family. In terms of assembly, homodimer. Mg(2+) is required as a cofactor.

The protein resides in the cytoplasm. The enzyme catalyses tRNA(Lys) + L-lysine + ATP = L-lysyl-tRNA(Lys) + AMP + diphosphate. The protein is Lysine--tRNA ligase of Citrobacter koseri (strain ATCC BAA-895 / CDC 4225-83 / SGSC4696).